A 151-amino-acid chain; its full sequence is D-aminoacyl-tRNA deacylase (151 aa).

The short motif at 137–138 (GP) is the Gly-cisPro motif, important for rejection of L-amino acids element.

Belongs to the DTD family. Homodimer.

The protein localises to the cytoplasm. It catalyses the reaction glycyl-tRNA(Ala) + H2O = tRNA(Ala) + glycine + H(+). It carries out the reaction a D-aminoacyl-tRNA + H2O = a tRNA + a D-alpha-amino acid + H(+). Its function is as follows. An aminoacyl-tRNA editing enzyme that deacylates mischarged D-aminoacyl-tRNAs. Also deacylates mischarged glycyl-tRNA(Ala), protecting cells against glycine mischarging by AlaRS. Acts via tRNA-based rather than protein-based catalysis; rejects L-amino acids rather than detecting D-amino acids in the active site. By recycling D-aminoacyl-tRNA to D-amino acids and free tRNA molecules, this enzyme counteracts the toxicity associated with the formation of D-aminoacyl-tRNA entities in vivo and helps enforce protein L-homochirality. The protein is D-aminoacyl-tRNA deacylase of Solibacter usitatus (strain Ellin6076).